The following is a 146-amino-acid chain: MQLETSYLGTVKYKQEDIIVFQGGLPGFPEETEFILLPFNEQPPFYILQSVRTKEIGFVCINPFLFWPDYEVELADSVVRQLSAESEQDVAIFVFLTIQQPFSKSTANLRAPIAVHAKKRFAKQLMLDGERYSLKAPIHTAGKGGR.

The protein belongs to the FliW family. In terms of assembly, interacts with translational regulator CsrA and flagellin(s).

Its subcellular location is the cytoplasm. Functionally, acts as an anti-CsrA protein, binds CsrA and prevents it from repressing translation of its target genes, one of which is flagellin. Binds to flagellin and participates in the assembly of the flagellum. The sequence is that of Flagellar assembly factor FliW from Shouchella clausii (strain KSM-K16) (Alkalihalobacillus clausii).